A 302-amino-acid polypeptide reads, in one-letter code: Flavin-dependent thymidylate synthase (302 aa).

The region spanning glycine 43–tyrosine 257 is the ThyX domain. FAD contacts are provided by residues threonine 89, arginine 112 to arginine 114, and glutamate 120. Residues glutamine 109–arginine 112, glutamate 120–arginine 124, and arginine 196 each bind dUMP. The ThyX motif motif lies at arginine 112–serine 122. Residues aspartate 212–histidine 214 and histidine 218 contribute to the FAD site. Arginine 223 contacts dUMP. Arginine 223 acts as the Involved in ionization of N3 of dUMP, leading to its activation in catalysis.

This sequence belongs to the thymidylate synthase ThyX family. Homotetramer. The cofactor is FAD.

It carries out the reaction dUMP + (6R)-5,10-methylene-5,6,7,8-tetrahydrofolate + NADPH + H(+) = dTMP + (6S)-5,6,7,8-tetrahydrofolate + NADP(+). It functions in the pathway pyrimidine metabolism; dTTP biosynthesis. Catalyzes the reductive methylation of 2'-deoxyuridine-5'-monophosphate (dUMP) to 2'-deoxythymidine-5'-monophosphate (dTMP) while utilizing 5,10-methylenetetrahydrofolate (mTHF) as the methyl donor, and NADPH and FADH(2) as the reductant. This chain is Flavin-dependent thymidylate synthase, found in Ruegeria pomeroyi (strain ATCC 700808 / DSM 15171 / DSS-3) (Silicibacter pomeroyi).